Reading from the N-terminus, the 112-residue chain is Probable small nuclear ribonucleoprotein Sm D2 (112 aa).

The span at 1 to 15 shows a compositional bias: basic and acidic residues; sequence MSRMNDETMEDKPDD. The interval 1–23 is disordered; that stretch reads MSRMNDETMEDKPDDSNGPLSIL. The Sm domain occupies 20-106; that stretch reads LSILMDSVNN…VILVLKNPLG (87 aa).

Belongs to the snRNP core protein family.

The protein localises to the nucleus. It localises to the cytoplasm. The protein resides in the cytosol. Plays a role in pre-mRNA splicing as a core component of the spliceosomal U1, U2, U4 and U5 small nuclear ribonucleoproteins (snRNPs), the building blocks of the spliceosome. The polypeptide is Probable small nuclear ribonucleoprotein Sm D2 (snrpd2) (Dictyostelium discoideum (Social amoeba)).